We begin with the raw amino-acid sequence, 288 residues long: Probable prolyl 4-hydroxylase 6 (288 aa).

Residues 1 to 4 (MDSQ) lie on the Cytoplasmic side of the membrane. A helical; Signal-anchor for type II membrane protein membrane pass occupies residues 5 to 27 (YFLAFSLSLLLIFSQISSFSFSV). Residues 28–288 (DPTRITQLSW…GFCRKSCKAC (261 aa)) are Lumenal-facing. Positions 116 to 238 (NGEALQILHY…KWSATRWIHV (123 aa)) constitute a Fe2OG dioxygenase domain. Fe cation contacts are provided by His134 and Asp136. Asn160 and Asn210 each carry an N-linked (GlcNAc...) asparagine glycan. His219 lines the Fe cation pocket. Lys229 is a binding site for 2-oxoglutarate. The ShKT domain occupies 248 to 288 (CVDDHESCQEWADAGECEKNPMYMVGSETSLGFCRKSCKAC). Cystine bridges form between Cys248-Cys288, Cys255-Cys281, and Cys264-Cys285.

This sequence belongs to the P4HA family. Fe(2+) serves as cofactor. It depends on L-ascorbate as a cofactor.

It is found in the endoplasmic reticulum membrane. The enzyme catalyses L-prolyl-[collagen] + 2-oxoglutarate + O2 = trans-4-hydroxy-L-prolyl-[collagen] + succinate + CO2. Functionally, catalyzes the post-translational formation of 4-hydroxyproline in -Xaa-Pro-Gly- sequences in proline-rich peptide sequences of plant glycoproteins and other proteins. Hydroxyprolines are important constituent of many plant cell wall glycoproteins such as extensins, hydroxyproline-rich glycoproteins, lectins and arabinogalactan proteins. This chain is Probable prolyl 4-hydroxylase 6, found in Arabidopsis thaliana (Mouse-ear cress).